The primary structure comprises 492 residues: MAREEQNIENRGSVHVVERESNLRSVVCGPVRWLKMLASKLHWSYVFAVVSNCGINQGFGYSLGHVATDYYMKDVQKVQPSQYQALSAITRISWIIFKPLFGILTDVLPIFGFHRRPYFILAGVIGVVSLLFISLQSNLHLYLALFWMTISSAAMAIADVTIDACTTYNSNKHPSLASDMQSLCSLSYSIGELLGFFMSGILVHLVGSKGVFGLLTFTFALVSVVGVLFSEPRVHGFSFKQNFTNAMKAMWRTIKCSDVWQPSLYMFITRALGLDIKEGLFYWFTDSKDGPLFAQETVGFILSIGSIGSILGVLLYNLRLKDHPFRKLFLWTQLLFALSGMFDLILVLRLNLKFGLPDYLFIVVDGIVSKMIIRLTWMVIFVLNTKLCPHGIEGTFFALLMSIDNAGLMTSSWLGGKMLHVLKVTRTEFGNLWLAVLVRNVMRLLPICFLFLVPQGDQNTFKLPAEIMGEDSEEEGTRNLELASLVDYVDRS.

Transmembrane regions (helical) follow at residues 46 to 66, 92 to 112, 117 to 137, 142 to 162, 186 to 206, 210 to 230, 264 to 285, 298 to 318, 328 to 348, 361 to 381, 396 to 416, and 433 to 453; these read VFAVVSNCGINQGFGYSLGHV, ISWIIFKPLFGILTDVLPIFG, PYFILAGVIGVVSLLFISLQS, YLALFWMTISSAAMAIADVTI, LSYSIGELLGFFMSGILVHLV, GVFGLLTFTFALVSVVGVLFS, LYMFITRALGLDIKEGLFYWFT, VGFILSIGSIGSILGVLLYNL, LFLWTQLLFALSGMFDLILVL, FIVVDGIVSKMIIRLTWMVIF, FFALLMSIDNAGLMTSSWLGG, and WLAVLVRNVMRLLPICFLFLV.

Belongs to the major facilitator superfamily. Folate-biopterin transporter (TC 2.A.71) family.

The protein localises to the membrane. Functionally, could mediate folate transport. In Arabidopsis thaliana (Mouse-ear cress), this protein is Probable folate-biopterin transporter 5.